We begin with the raw amino-acid sequence, 283 residues long: Pantothenate synthetase (283 aa).

An ATP-binding site is contributed by 31 to 38 (MGALHDGH). Catalysis depends on His-38, which acts as the Proton donor. Gln-62 serves as a coordination point for (R)-pantoate. Residue Gln-62 participates in beta-alanine binding. Residue 148-151 (GKKD) participates in ATP binding. Position 154 (Gln-154) interacts with (R)-pantoate. ATP contacts are provided by residues Val-177 and 185 to 188 (KSSR).

This sequence belongs to the pantothenate synthetase family. As to quaternary structure, homodimer.

Its subcellular location is the cytoplasm. The enzyme catalyses (R)-pantoate + beta-alanine + ATP = (R)-pantothenate + AMP + diphosphate + H(+). It participates in cofactor biosynthesis; (R)-pantothenate biosynthesis; (R)-pantothenate from (R)-pantoate and beta-alanine: step 1/1. Its function is as follows. Catalyzes the condensation of pantoate with beta-alanine in an ATP-dependent reaction via a pantoyl-adenylate intermediate. The sequence is that of Pantothenate synthetase from Staphylococcus aureus (strain MRSA252).